Consider the following 355-residue polypeptide: Ataxin-3 (355 aa).

Residue Met1 forms a Peptide (Met-Gly) (interchain with G-Cter in ubiquitin) linkage. The 180-residue stretch at 1 to 180 folds into the Josephin domain; sequence MESIFHEKQE…DCEADQLLQM (180 aa). Cys14 functions as the Nucleophile in the catalytic mechanism. His119 serves as the catalytic Proton acceptor. Asn134 is an active-site residue. Residue Lys200 forms a Glycyl lysine isopeptide (Lys-Gly) (interchain with G-Cter in ubiquitin) linkage. UIM domains follow at residues 224-243 and 244-263; these read DDEDDLQRALAMSRQEIDME and DEEADLRRAIQLSMQGSSRG. Positions 257-333 are disordered; it reads MQGSSRGMCE…AGNAMSEEDV (77 aa). 3 positions are modified to phosphoserine: Ser268, Ser272, and Ser273. Over residues 279–301 the composition is skewed to basic and acidic residues; the sequence is EELRKRREAYFEKQQHQQQEADR. The span at 312–326 shows a compositional bias: polar residues; the sequence is PTTSSGGLRSNQAGN. Ser321 is subject to Phosphoserine. In terms of domain architecture, UIM 3 spans 329-348; it reads SEEDVLRATVTVSLETAKDS.

Interacts with STUB1/CHIP (when monoubiquitinated). Interacts with DNA repair proteins RAD23A and RAD23B. Interacts with BECN1 (via its poly-Gln domain). Interacts with PRKN, UBR2, VCP and tubulin. Monoubiquitinated by UBE2W, possibly leading to activate the deubiquitinating enzyme activity. Ubiquitously expressed.

It localises to the nucleus matrix. The protein resides in the nucleus. Its subcellular location is the lysosome membrane. The enzyme catalyses Thiol-dependent hydrolysis of ester, thioester, amide, peptide and isopeptide bonds formed by the C-terminal Gly of ubiquitin (a 76-residue protein attached to proteins as an intracellular targeting signal).. Deubiquitinating enzyme involved in protein homeostasis maintenance, transcription, cytoskeleton regulation, myogenesis and degradation of misfolded chaperone substrates. Binds long polyubiquitin chains and trims them, while it has weak or no activity against chains of 4 or less ubiquitins. Involved in degradation of misfolded chaperone substrates via its interaction with STUB1/CHIP: recruited to monoubiquitinated STUB1/CHIP, and restricts the length of ubiquitin chain attached to STUB1/CHIP substrates and preventing further chain extension. Interacts with key regulators of transcription and represses transcription: acts as a histone-binding protein that regulates transcription. Acts as a negative regulator of mTORC1 signaling in response to amino acid deprivation by mediating deubiquitination of RHEB, thereby promoting RHEB inactivation by the TSC-TBC complex. Regulates autophagy via the deubiquitination of 'Lys-402' of BECN1 leading to the stabilization of BECN1. The chain is Ataxin-3 (Atxn3) from Rattus norvegicus (Rat).